The primary structure comprises 205 residues: Nuclear transcription factor Y subunit beta (205 aa).

Positions 1-50 (MDGDSSTTDASQLGIAGDYIGGSHYVIQPHDDTEDSMNDHEDTNGSKESF) are a domain. A disordered region spans residues 24–50 (HYVIQPHDDTEDSMNDHEDTNGSKESF). Residues 37-50 (MNDHEDTNGSKESF) are compositionally biased toward basic and acidic residues. The b domain stretch occupies residues 51 to 140 (REQDIYLPIA…PLKLYLQKFR (90 aa)). A DNA-binding region spans residues 57 to 63 (LPIANVA). Residues 84–95 (VQECVSEFISFI) form a subunit association domain (SAD) region. The segment at 141–201 (EAMKGEKGIG…SYQQISGVQQ (61 aa)) is c domain.

This sequence belongs to the NFYB/HAP3 subunit family. In terms of assembly, heterotrimeric transcription factor composed of three components, NF-YA, NF-YB and NF-YC. NF-YB and NF-YC must interact and dimerize for NF-YA association and DNA binding.

It is found in the nucleus. In terms of biological role, component of the sequence-specific heterotrimeric transcription factor (NF-Y) which specifically recognizes a 5'-CCAAT-3' box motif found in the promoters of its target genes. NF-Y can function as both an activator and a repressor, depending on its interacting cofactors. This Gallus gallus (Chicken) protein is Nuclear transcription factor Y subunit beta (NFYB).